A 189-amino-acid polypeptide reads, in one-letter code: MGLLDAGITKHNVVVTSVDNVLNWARLSSLWPMGFGLACCAIEMMATNASNYDLERFGIFPRSSPRQSDLMIVAGTVTMKMAERVVRLYEQMPEPRYVLSMGSCSNCGGPYWEHGYHVLKGVDRVIPVDVYVPGCPPRPESLIGGLMKVQELIRMEQIGLSRADALKKLAEKSIDPQSVIEQHRQVARA.

Residues Cys39, Cys40, Cys104, and Cys135 each contribute to the [4Fe-4S] cluster site.

This sequence belongs to the complex I 20 kDa subunit family. As to quaternary structure, NDH-1 is composed of 14 different subunits. Subunits NuoB, C, D, E, F, and G constitute the peripheral sector of the complex. [4Fe-4S] cluster is required as a cofactor.

It is found in the cell inner membrane. It carries out the reaction a quinone + NADH + 5 H(+)(in) = a quinol + NAD(+) + 4 H(+)(out). In terms of biological role, NDH-1 shuttles electrons from NADH, via FMN and iron-sulfur (Fe-S) centers, to quinones in the respiratory chain. The immediate electron acceptor for the enzyme in this species is believed to be a menaquinone. Couples the redox reaction to proton translocation (for every two electrons transferred, four hydrogen ions are translocated across the cytoplasmic membrane), and thus conserves the redox energy in a proton gradient. In Chlorobium limicola (strain DSM 245 / NBRC 103803 / 6330), this protein is NADH-quinone oxidoreductase subunit B.